Reading from the N-terminus, the 337-residue chain is ERI1 exoribonuclease 3 (337 aa).

The 175-residue stretch at 146-320 folds into the Exonuclease domain; it reads FLVLDFEATC…DDCKNIANIM (175 aa). Residues Asp150, Glu152, and Asp249 each contribute to the Mg(2+) site. Catalysis depends on Glu152, which acts as the Proton acceptor. Position 152 (Glu152) interacts with AMP. Catalysis depends on His307, which acts as the Proton acceptor. His307 is an AMP binding site. Asp312 is a Mg(2+) binding site.

In terms of assembly, interacts with PRNP. The cofactor is Mg(2+). Highly expressed in the brain, heart, thyroid and testis. Expressed at low levels in the muscle cells, liver, pancreas and kidney.

This is ERI1 exoribonuclease 3 (Eri3) from Mus musculus (Mouse).